The primary structure comprises 645 residues: Cyclin-D-binding Myb-like transcription factor 1 (645 aa).

2 disordered regions span residues 34–71 (QNDGEDLGSDETTEPVHKRIRLSSEDGEDPQDSASTEY) and 95–119 (RDEELESDDLSETTGKDSSAQKKGE). Composition is skewed to acidic residues over residues 36 to 46 (DGEDLGSDETT) and 95 to 105 (RDEELESDDLS). Positions 219-257 (GKYTDEEINKLKELRQKHGNDWATIGSALGRSASSVKDR) constitute a Myb-like 1 domain. An HTH myb-type domain is found at 262-327 (KDTCNTGKWT…KWLNYLNWKQ (66 aa)). Residues 300 to 323 (WASVAELVGTRSEKQCRSKWLNYL) constitute a DNA-binding region (H-T-H motif). The region spanning 333–382 (WTKEDDINLVRRIAELEVEDENEINWDILASGWSSVRSPQWLRSKWWTIK) is the Myb-like 2 domain. The interval 568 to 645 (VKEEPSENQT…ILENQEEGSN (78 aa)) is disordered. The span at 587–597 (EQSKQGEKTLD) shows a compositional bias: basic and acidic residues. Polar residues predominate over residues 615–625 (IPTNEDISSDS).

It belongs to the DMTF1 family.

It is found in the nucleus. In terms of biological role, transcriptional activator which activates the CDKN2A/ARF locus in response to Ras-Raf signaling, thereby promoting p53/TP53-dependent growth arrest. Binds to the consensus sequence 5'-CCCG[GT]ATGT-3'. This is Cyclin-D-binding Myb-like transcription factor 1 (dmtf1) from Danio rerio (Zebrafish).